Here is a 432-residue protein sequence, read N- to C-terminus: Meiotically up-regulated gene 134 protein (432 aa).

This sequence belongs to the UPF0300 family.

Its subcellular location is the cytoplasm. The protein localises to the cell cortex. Functionally, has a role in meiosis. The polypeptide is Meiotically up-regulated gene 134 protein (mug134) (Schizosaccharomyces pombe (strain 972 / ATCC 24843) (Fission yeast)).